The chain runs to 631 residues: Eukaryotic translation initiation factor 3 subunit L (631 aa).

The region spanning 335 to 526 (TFVSVLIFFI…AETTLLDGER (192 aa)) is the PCI domain. Positions 571 to 631 (KSAPLPVRKP…PKSRQARIAA (61 aa)) are disordered. The span at 580–612 (PASSSAPAPATTAAPISKSGESAAPAPAEAPAA) shows a compositional bias: low complexity.

It belongs to the eIF-3 subunit L family. Component of the eukaryotic translation initiation factor 3 (eIF-3) complex.

The protein resides in the cytoplasm. In terms of biological role, component of the eukaryotic translation initiation factor 3 (eIF-3) complex, which is involved in protein synthesis of a specialized repertoire of mRNAs and, together with other initiation factors, stimulates binding of mRNA and methionyl-tRNAi to the 40S ribosome. The eIF-3 complex specifically targets and initiates translation of a subset of mRNAs involved in cell proliferation. This Cryptococcus neoformans var. neoformans serotype D (strain B-3501A) (Filobasidiella neoformans) protein is Eukaryotic translation initiation factor 3 subunit L.